The primary structure comprises 563 residues: Arginine--tRNA ligase (563 aa).

Positions 121 to 131 match the 'HIGH' region motif; the sequence is PNIAKPMSMGH.

This sequence belongs to the class-I aminoacyl-tRNA synthetase family. In terms of assembly, monomer.

It localises to the cytoplasm. It catalyses the reaction tRNA(Arg) + L-arginine + ATP = L-arginyl-tRNA(Arg) + AMP + diphosphate. The protein is Arginine--tRNA ligase of Leuconostoc citreum (strain KM20).